The sequence spans 131 residues: Sec-independent protein translocase protein TatB (131 aa).

Residues 2–22 (FDGIGFMELLLIGVLGLVVLG) form a helical membrane-spanning segment. The interval 69–131 (NQGLKNLAPE…ENAKSDKPNG (63 aa)) is disordered. Residues 105 to 123 (AKETPAKETATTETTSTEN) show a composition bias toward low complexity.

Belongs to the TatB family. As to quaternary structure, the Tat system comprises two distinct complexes: a TatABC complex, containing multiple copies of TatA, TatB and TatC subunits, and a separate TatA complex, containing only TatA subunits. Substrates initially bind to the TatABC complex, which probably triggers association of the separate TatA complex to form the active translocon.

The protein resides in the cell inner membrane. Its function is as follows. Part of the twin-arginine translocation (Tat) system that transports large folded proteins containing a characteristic twin-arginine motif in their signal peptide across membranes. Together with TatC, TatB is part of a receptor directly interacting with Tat signal peptides. TatB may form an oligomeric binding site that transiently accommodates folded Tat precursor proteins before their translocation. The protein is Sec-independent protein translocase protein TatB of Shewanella piezotolerans (strain WP3 / JCM 13877).